An 816-amino-acid chain; its full sequence is H(+)/Cl(-) exchange transporter 5 (816 aa).

At 1–124 (MAMWQGAMDN…WALIHSVSDA (124 aa)) the chain is on the cytoplasmic side. The next 2 membrane-spanning stretches (helical) occupy residues 125-162 (FSGWLLMLLIGLLSGSLAGLIDISAHWMTDLKEGICTG) and 208-231 (VNYFMYVLWALLFAFLAVSLVKAF). The short motif at 237–241 (GSGIP) is the Selectivity filter part_1 element. Serine 238 is a chloride binding site. The segment at residues 240–247 (IPEIKTIL) is an intramembrane region (helical). 2 helical membrane passes run 256 to 275 (LGKWTLVIKTITLVLAVSSG) and 281 to 300 (EGPLVHVACCCGNILCHCFN). The Selectivity filter part_2 motif lies at 279 to 283 (GKEGP). Intramembrane regions (helical) lie at residues 312–324 (VLSAAAAAGVSVA) and 328–336 (PIGGVLFSL). Helical transmembrane passes span 348 to 366 (LWRSFFAALVAAFTLRSIN), 389 to 414 (LVPFIVLGIFGGLWGALFIRTNIAWC), 422 to 442 (LGKYPVVEVLIVTAITAILAF), 498 to 518 (MWQLALTLILKIVITIFTFGM), and 523 to 542 (GLFIPSMAVGAIAGRLLGVG). Positions 523–527 (GLFIP) match the Selectivity filter part_3 motif. Phenylalanine 525 contributes to the chloride binding site. Residues 570–584 (GLYAMVGAAACLGGV) constitute an intramembrane region (helical). The note=Loop between two helices intramembrane region spans 585–587 (TRM). An intramembrane region (helical) is located at residues 588–599 (TVSLVVIMFELT). The segment at residues 600–604 (GGLEY) is an intramembrane region (note=Loop between two helices). A helical membrane pass occupies residues 605 to 622 (IVPLMAAAMTSKWVADAL). The Cytoplasmic segment spans residues 623–816 (GREGIYDAHI…NQDPESILFN (194 aa)). Chloride is bound at residue tyrosine 628. CBS domains follow at residues 656–720 (MKPR…ARKK) and 752–811 (ILDL…QDPE). ATP contacts are provided by residues threonine 666, 687-689 (YSG), and 794-797 (TKKD).

It belongs to the chloride channel (TC 2.A.49) family. ClC-5/CLCN5 subfamily. Interacts with NEDD4 and NEDD4L. In terms of processing, ubiquitinated by NEDD4L in the presence of albumin; which promotes endocytosis and proteasomal degradation. As to expression, kidney specific.

The protein localises to the golgi apparatus membrane. Its subcellular location is the endosome membrane. It is found in the cell membrane. It catalyses the reaction 2 chloride(in) + H(+)(out) = 2 chloride(out) + H(+)(in). Its function is as follows. Proton-coupled chloride transporter. Functions as antiport system and exchanges chloride ions against protons. Important for normal acidification of the endosome lumen. May play an important role in renal tubular function. The CLC channel family contains both chloride channels and proton-coupled anion transporters that exchange chloride or another anion for protons. The absence of conserved gating glutamate residues is typical for family members that function as channels. This chain is H(+)/Cl(-) exchange transporter 5 (Clcn5), found in Rattus norvegicus (Rat).